Consider the following 165-residue polypeptide: Ribosome maturation factor RimM (165 aa).

A PRC barrel domain is found at 94–165 (EDEFYIADLN…YVILNYQTKV (72 aa)).

Belongs to the RimM family. As to quaternary structure, binds ribosomal protein uS19.

Its subcellular location is the cytoplasm. In terms of biological role, an accessory protein needed during the final step in the assembly of 30S ribosomal subunit, possibly for assembly of the head region. Essential for efficient processing of 16S rRNA. May be needed both before and after RbfA during the maturation of 16S rRNA. It has affinity for free ribosomal 30S subunits but not for 70S ribosomes. The polypeptide is Ribosome maturation factor RimM (Rickettsia prowazekii (strain Madrid E)).